We begin with the raw amino-acid sequence, 567 residues long: Lipase maturation factor 1 (567 aa).

The interval 1–39 (MRPDSPTMAAPAESLRRRKTGYSDPEPESPPAPGRGPAG) is disordered. The Cytoplasmic portion of the chain corresponds to 1–49 (MRPDSPTMAAPAESLRRRKTGYSDPEPESPPAPGRGPAGSPAHLHTGTF). A helical transmembrane segment spans residues 50–72 (WLTRIVLLKALAFVYFVAFLVAF). Residues 73-127 (HQNKQLIGDRGLLPCRVFLKNFQQYFQDRTSWEVFSYMPTILWLMDWSDMNSNLD) are Lumenal-facing. Residues 128–151 (LLALLGLGISSFVLITGCANMLLM) form a helical membrane-spanning segment. Residues 152 to 207 (AALWGLYMSLVNVGHVWYSFGWESQLLETGFLGIFLCPLWTLSRLPQHTPTSRIVL) lie on the Cytoplasmic side of the membrane. A helical transmembrane segment spans residues 208-221 (WGFRWLIFRIMLGA). At 222–292 (GLIKIRGDRC…LGRRACIIHG (71 aa)) the chain is on the lumenal side. Residues 293–321 (VLQILFQAVLIVSGNLSFLNWLTMVPSLA) traverse the membrane as a helical segment. At 322–367 (CFDDATLGFLFPSGPGSLKDRVLQMQRDIRGARPEPRFGSVVRRAA) the chain is on the cytoplasmic side. A helical transmembrane segment spans residues 368-388 (NVSLGVLLAWLSVPVVLNLLS). Residues 389 to 567 (SRQVMNTHFN…DRGWPLPGPL (179 aa)) lie on the Lumenal side of the membrane.

Belongs to the lipase maturation factor family. Interacts with LPL and SEL1L.

The protein resides in the endoplasmic reticulum membrane. Its function is as follows. Involved in the maturation of specific proteins in the endoplasmic reticulum. Required for maturation and transport of active lipoprotein lipase (LPL) through the secretory pathway. Each LMF1 molecule chaperones 50 or more molecules of LPL. The protein is Lipase maturation factor 1 (LMF1) of Homo sapiens (Human).